The primary structure comprises 64 residues: Basic secretory protease (64 aa).

A divalent metal cation serves as cofactor. In terms of processing, glycosylated.

Inhibited by EDTA. Metalloprotease, digests gelatin and azocasein (in vitro). This Boswellia serrata (Indian frankincense) protein is Basic secretory protease.